The chain runs to 567 residues: uncharacterized protein (567 aa).

The protein belongs to the protein kinase superfamily. ADCK protein kinase family.

This is an uncharacterized protein from Synechocystis sp. (strain ATCC 27184 / PCC 6803 / Kazusa).